Here is an 86-residue protein sequence, read N- to C-terminus: uncharacterized protein (86 aa).

The segment at 1 to 21 is disordered; sequence MLSNSTSRNRHSKHNKKNTRE. Over residues 8 to 17 the composition is skewed to basic residues; sequence RNRHSKHNKK.

This is an uncharacterized protein from Acidianus convivator (ATV).